A 209-amino-acid polypeptide reads, in one-letter code: Glycerol-3-phosphate acyltransferase (209 aa).

Helical transmembrane passes span 8–28, 78–98, 124–144, 149–169, and 170–190; these read NVLF…YILA, VLVL…LIGI, VLLV…LIVA, ISSL…FIVH, and PDMP…IIFY.

This sequence belongs to the PlsY family. In terms of assembly, probably interacts with PlsX.

The protein resides in the cell inner membrane. The catalysed reaction is an acyl phosphate + sn-glycerol 3-phosphate = a 1-acyl-sn-glycero-3-phosphate + phosphate. It participates in lipid metabolism; phospholipid metabolism. Functionally, catalyzes the transfer of an acyl group from acyl-phosphate (acyl-PO(4)) to glycerol-3-phosphate (G3P) to form lysophosphatidic acid (LPA). This enzyme utilizes acyl-phosphate as fatty acyl donor, but not acyl-CoA or acyl-ACP. In Nitratiruptor sp. (strain SB155-2), this protein is Glycerol-3-phosphate acyltransferase.